The primary structure comprises 324 residues: MEKFTMSETKVWSGRIDSADGPTAVRWHQQVRAPQEDSPAGVALIGYPCDLGVYINKGRVGAANGPDEIIKALANLPWRLTHPVYDCGNIQWEGELEDAQAALATKVFKQLQAGHSPIVLGGGHDVAWGSFQGLRRHLDQAAPDKVLGILNLDAHFDLRSDSEGASSGTPFQQIAKYCKTAGKPFHYAVFGISEYANTQALFDRADKLGVTYLKDTHCGYTQLGPMLRALDAFLSKVDCLYLTIDLDVLPAATAPGVSAPAAYGVPLEIVEAMLDAIQRKALPVLMADIAEYNPTYDIDSRTARVAARLAARLAGLLGKPTTKA.

6 residues coordinate Mn(2+): His-124, Asp-153, His-155, Asp-157, Asp-245, and Asp-247.

This sequence belongs to the arginase family. Mn(2+) serves as cofactor.

The catalysed reaction is N-formimidoyl-L-glutamate + H2O = formamide + L-glutamate. It participates in amino-acid degradation; L-histidine degradation into L-glutamate; L-glutamate from N-formimidoyl-L-glutamate (hydrolase route): step 1/1. Functionally, catalyzes the conversion of N-formimidoyl-L-glutamate to L-glutamate and formamide. The chain is Formimidoylglutamase from Hahella chejuensis (strain KCTC 2396).